The sequence spans 216 residues: Ras-related protein Rab11A (216 aa).

GTP contacts are provided by residues 19 to 27 (GDSGVGKSN), 38 to 44 (CLESKST), 67 to 71 (DTAGQ), 125 to 128 (NKSD), and 155 to 157 (SAL). The short motif at 41-49 (SKSTIGVEF) is the Effector region element. Residues Cys213 and Cys214 are each lipidated (S-geranylgeranyl cysteine).

This sequence belongs to the small GTPase superfamily. Rab family.

The protein resides in the cell membrane. The sequence is that of Ras-related protein Rab11A (RAB11A) from Nicotiana tabacum (Common tobacco).